A 404-amino-acid polypeptide reads, in one-letter code: Cysteine desulfurase IscS (404 aa).

Residues 75 to 76, Asn155, Gln183, and 203 to 205 contribute to the pyridoxal 5'-phosphate site; these read AT and SGH. Position 206 is an N6-(pyridoxal phosphate)lysine (Lys206). Thr243 provides a ligand contact to pyridoxal 5'-phosphate. Cys328 serves as the catalytic Cysteine persulfide intermediate. Position 328 (Cys328) interacts with [2Fe-2S] cluster.

It belongs to the class-V pyridoxal-phosphate-dependent aminotransferase family. NifS/IscS subfamily. Homodimer. Forms a heterotetramer with IscU, interacts with other sulfur acceptors. Requires pyridoxal 5'-phosphate as cofactor.

The protein resides in the cytoplasm. It catalyses the reaction (sulfur carrier)-H + L-cysteine = (sulfur carrier)-SH + L-alanine. It participates in cofactor biosynthesis; iron-sulfur cluster biosynthesis. In terms of biological role, master enzyme that delivers sulfur to a number of partners involved in Fe-S cluster assembly, tRNA modification or cofactor biosynthesis. Catalyzes the removal of elemental sulfur and selenium atoms from cysteine and selenocysteine to produce alanine. Functions as a sulfur delivery protein for Fe-S cluster synthesis onto IscU, an Fe-S scaffold assembly protein, as well as other S acceptor proteins. Also functions as a selenium delivery protein in the pathway for the biosynthesis of selenophosphate. The sequence is that of Cysteine desulfurase IscS from Salmonella gallinarum (strain 287/91 / NCTC 13346).